Here is a 353-residue protein sequence, read N- to C-terminus: tRNA-specific 2-thiouridylase MnmA 1 (353 aa).

Residues 9 to 16 and methionine 35 contribute to the ATP site; that span reads AMSGGVDS. Residue cysteine 98 is the Nucleophile of the active site. An intrachain disulfide couples cysteine 98 to cysteine 194. Glycine 122 is an ATP binding site. Positions 144-146 are interaction with tRNA; it reads KDQ. Cysteine 194 (cysteine persulfide intermediate) is an active-site residue. The interval 300–301 is interaction with tRNA; it reads RY.

It belongs to the MnmA/TRMU family.

It localises to the cytoplasm. It carries out the reaction S-sulfanyl-L-cysteinyl-[protein] + uridine(34) in tRNA + AH2 + ATP = 2-thiouridine(34) in tRNA + L-cysteinyl-[protein] + A + AMP + diphosphate + H(+). Its function is as follows. Catalyzes the 2-thiolation of uridine at the wobble position (U34) of tRNA, leading to the formation of s(2)U34. The polypeptide is tRNA-specific 2-thiouridylase MnmA 1 (Clostridium botulinum (strain Okra / Type B1)).